Here is a 185-residue protein sequence, read N- to C-terminus: MSNTASLKKEYAERIAPALKSQFQYSSTMQIPVLKKIVINQGLGMAVADKKIIEVAINEMTAITGQKAVATISRKDIANFKLRKKMPIGVMVTLRRERMYEFLEKLVRVALPRIRDFKGIETKFDGKGNYTLGIQEQIIFPEINIDSITRILGMNITFVTSAQTDEEGYALLKEFGLPFKNAKKD.

Belongs to the universal ribosomal protein uL5 family. In terms of assembly, part of the 50S ribosomal subunit; part of the 5S rRNA/L5/L18/L25 subcomplex. Contacts the 5S rRNA and the P site tRNA. Forms a bridge to the 30S subunit in the 70S ribosome.

Functionally, this is one of the proteins that bind and probably mediate the attachment of the 5S RNA into the large ribosomal subunit, where it forms part of the central protuberance. In the 70S ribosome it contacts protein S13 of the 30S subunit (bridge B1b), connecting the 2 subunits; this bridge is implicated in subunit movement. Contacts the P site tRNA; the 5S rRNA and some of its associated proteins might help stabilize positioning of ribosome-bound tRNAs. The chain is Large ribosomal subunit protein uL5 from Bacteroides fragilis (strain ATCC 25285 / DSM 2151 / CCUG 4856 / JCM 11019 / LMG 10263 / NCTC 9343 / Onslow / VPI 2553 / EN-2).